A 757-amino-acid polypeptide reads, in one-letter code: MDVNPTLLFLKVPAQNAISTTFPYTGDPPYSHGTGTGYTMDTVNRTHQYSEKGKWTTNTETGAPQLNPIDGPLPEDNEPSGYAQTDCVLEAMAFLEESHPGIFENSCLETMEVVQQTRVDRLTQGRQTYDWTLNRNQPAATALANTIEVFRSNGLTANESGRLIDFLKDVMESMDKEEIEITTHFQRKRRVRDNMTKKMVTQRTIGKKKQRVNKRSYLIRALTLNTMTKDAERGKLKRRAIATPGMQIRGFVYFVETLARSICEKLEQSGLPVGGNEKKAKLANVVRKMMTNSQDTELSFTITGDNTKWNENQNPRMFLAMITYITKNQPEWFRNILSIAPIMFSNKMARLGKGYMFESKRMKLRTQIPAEMLASIDLKYFNESTRKKIEKIRPLLIDGTASLSPGMMMGMFNMLSTVLGVSILNLGQKKYTKTTYWWDGLQSSDDFALIVNAPNHEGIQAGVDRFYRTCKLVGINMSKKKSYINRTGTFEFTSFFYRYGFVANFSMELPSFGVSGINESADMSIGVTVIKNNMINNDLGPATAQMALQLFIKDYRYTYRCHRGDTQIQTRRSFELKKLWEQTRSKAGLLVSDGGPNLYNIRNLHIPEVCLKWELMDEDYQGRLCNPLNPFVSHKEIESVNNAVVMPAHGPAKSMEYDAVATTHSWIPKRNRSILNTSQRGILEDEQMYQKCCNLFEKFFPSSSYRRPVGISSMVEAMVSRARIDARIDFESGRIKKEEFSEIMKICSTIEELRRQK.

The disordered stretch occupies residues 50–82 (SEKGKWTTNTETGAPQLNPIDGPLPEDNEPSGY). Polar residues predominate over residues 55-64 (WTTNTETGAP). 2 short sequence motifs (nuclear localization signal) span residues 187–195 (RKRRVRDNM) and 203–216 (RTIGKKKQRVNKRS). The interval 249–256 (RGFVYFVE) is promoter-binding site. The 198-residue stretch at 286–483 (VRKMMTNSQD…GINMSKKKSY (198 aa)) folds into the RdRp catalytic domain.

It belongs to the influenza viruses polymerase PB1 family. Influenza RNA polymerase is composed of three subunits: PB1, PB2 and PA. Interacts (via N-terminus) with PA (via C-terminus). Interacts (via C-terminus) with PB2 (via N-terminus); this interaction is essential for transcription initiation. Interacts (via C-terminus) with human PKP2 (via N-terminus); the interaction competitively inhibits the interaction between the RNA polymerase subunits PB1 and PB2. In terms of processing, phosphorylated by host PRKCA.

The protein localises to the host nucleus. The protein resides in the host cytoplasm. It catalyses the reaction RNA(n) + a ribonucleoside 5'-triphosphate = RNA(n+1) + diphosphate. RNA-dependent RNA polymerase which is responsible for replication and transcription of virus RNA segments. The transcription of viral mRNAs occurs by a unique mechanism called cap-snatching. 5' methylated caps of cellular mRNAs are cleaved after 10-13 nucleotides by PA. In turn, these short capped RNAs are used as primers by PB1 for transcription of viral mRNAs. During virus replication, PB1 initiates RNA synthesis and copy vRNA into complementary RNA (cRNA) which in turn serves as a template for the production of more vRNAs. This chain is RNA-directed RNA polymerase catalytic subunit, found in Influenza A virus (strain A/Kiev/59/1979 H1N1).